The following is a 549-amino-acid chain: MKPDRGPRGKQSQAELMMMTVADVIKQLVEAHEQGKDVNLNKLKTKTSAKYGLSAQPRLVDIIAAVPPQYRKILVPKLKAKPIRTASGIAVVAVMCKPHRCPHINFTGNICVYCPGGPDSDFEYSTQSYTGYEPTSMRAIRARYDPYLQTRHRVEQLKQLGHSVDKVEFIVMGGTFMALSEDYRDFFIRNLHDALSGHTSNSVSEAVRYSERSNTKCVGITIETRPDYCLKRHLSDMLSYGCTRLEIGVQSVYEDVARDTNRGHTVKAVCESFHMAKDAGFKVVSHMMPDLPNVGLERDTEQFIEFFENPAFRPDGMKLYPTLVIRGTGLYELWKTGRYRSYSPSTLVDLVARILALVPPWTRVYRVQRDIPMPLVSSGVEHGNLRELALARMKDLGTECRDVRTREVGIQEIHHKVRPYQVELIRRDYVANGGWETFLSYEDPEQDILIGLLRLRKCSEQSFRPELKGGVSIVRELHVYGSVVPISSRDPSKFQHQGFGMLLMEEAERIAREEHGSCKIAVISGVGTRNYYRKLGYELEGPYMVKKLD.

Residues 84 to 374 (RTASGIAVVA…YRVQRDIPMP (291 aa)) form the Radical SAM core domain. Residues cysteine 101, cysteine 111, and cysteine 114 each contribute to the [4Fe-4S] cluster site. Residues lysine 166, 476–479 (ELHV), 499–501 (FGM), and tyrosine 532 each bind acetyl-CoA. The 152-residue stretch at 398-549 (TECRDVRTRE…EGPYMVKKLD (152 aa)) folds into the N-acetyltransferase domain.

Belongs to the ELP3 family. Component of the elongator complex. Interacts with transcriptional repressors snai1 and snai2; interaction with snai1 inhibits its ubiquitination and stabilizes it. Requires [4Fe-4S] cluster as cofactor.

The protein localises to the cytoplasm. It is found in the nucleus. It carries out the reaction uridine(34) in tRNA + acetyl-CoA + S-adenosyl-L-methionine + H2O = 5-(carboxymethyl)uridine(34) in tRNA + 5'-deoxyadenosine + L-methionine + CoA + 2 H(+). It participates in tRNA modification; 5-methoxycarbonylmethyl-2-thiouridine-tRNA biosynthesis. Its function is as follows. Catalytic tRNA acetyltransferase subunit of the elongator complex which is required for multiple tRNA modifications, including mcm5U (5-methoxycarbonylmethyl uridine), mcm5s2U (5-methoxycarbonylmethyl-2-thiouridine), and ncm5U (5-carbamoylmethyl uridine). In the elongator complex, acts as a tRNA uridine(34) acetyltransferase by mediating formation of carboxymethyluridine in the wobble base at position 34 in tRNAs. Stabilizes transcriptional repressor snai1 by inhibiting its ubiquitination which promotes neural crest cell migration. This Xenopus tropicalis (Western clawed frog) protein is Elongator complex protein 3.